Consider the following 143-residue polypeptide: MFFGTFTPKLDDKGRLTLPAKFREELKDGLMVVKGQDHSLAIYPREEFLLRARKAAAASRSNPQARAFVRNLAASADEQDLDSQGRISVSAAHREYAGLKKECVVIGSVDFLEIWDAQAWEEYSAAHEADFAAGDDEAFANFL.

SpoVT-AbrB domains follow at residues Thr5–Glu47 and Ala76–Ala119.

It belongs to the MraZ family. In terms of assembly, forms oligomers.

It is found in the cytoplasm. It localises to the nucleoid. The chain is Transcriptional regulator MraZ from Corynebacterium urealyticum (strain ATCC 43042 / DSM 7109).